Consider the following 80-residue polypeptide: Large ribosomal subunit protein bL31B (80 aa).

Belongs to the bacterial ribosomal protein bL31 family. Type B subfamily. As to quaternary structure, part of the 50S ribosomal subunit.

In Methylobacillus flagellatus (strain ATCC 51484 / DSM 6875 / VKM B-1610 / KT), this protein is Large ribosomal subunit protein bL31B.